A 210-amino-acid chain; its full sequence is 7-carboxy-7-deazaguanine synthase (210 aa).

Substrate contacts are provided by residues Leu12–Gly14 and Arg27. In terms of domain architecture, Radical SAM core spans Gln18–Pro210. [4Fe-4S] cluster is bound by residues Cys31, Cys46, and Cys49. Thr51 contacts Mg(2+). Substrate is bound at residue Thr90. S-adenosyl-L-methionine is bound by residues Gly92, Ser133–Lys135, and Gln173–Asp176. Substrate is bound at residue Pro210.

This sequence belongs to the radical SAM superfamily. 7-carboxy-7-deazaguanine synthase family. As to quaternary structure, homodimer. It depends on [4Fe-4S] cluster as a cofactor. S-adenosyl-L-methionine is required as a cofactor. Requires Mg(2+) as cofactor.

The catalysed reaction is 6-carboxy-5,6,7,8-tetrahydropterin + H(+) = 7-carboxy-7-deazaguanine + NH4(+). It participates in purine metabolism; 7-cyano-7-deazaguanine biosynthesis. Catalyzes the complex heterocyclic radical-mediated conversion of 6-carboxy-5,6,7,8-tetrahydropterin (CPH4) to 7-carboxy-7-deazaguanine (CDG), a step common to the biosynthetic pathways of all 7-deazapurine-containing compounds. The sequence is that of 7-carboxy-7-deazaguanine synthase from Caulobacter vibrioides (strain ATCC 19089 / CIP 103742 / CB 15) (Caulobacter crescentus).